The primary structure comprises 361 residues: Holliday junction branch migration complex subunit RuvB (361 aa).

Positions 1–21 (MHKDEDQRLLGAVPLPNDPDR) are disordered. Residues 1 to 184 (MHKDEDQRLL…FGIPIRLNFY (184 aa)) are large ATPase domain (RuvB-L). Residues leucine 23, arginine 24, glycine 65, lysine 68, threonine 69, threonine 70, 131-133 (EDY), arginine 174, tyrosine 184, and arginine 221 each bind ATP. Mg(2+) is bound at residue threonine 69. The interval 185 to 255 (TIEELEYIVQ…IADEALSRLE (71 aa)) is small ATPAse domain (RuvB-S). A head domain (RuvB-H) region spans residues 258 to 361 (HLGLDPLDRR…QTVLWDEADD (104 aa)). DNA-binding residues include arginine 294, arginine 313, and arginine 318.

Belongs to the RuvB family. In terms of assembly, homohexamer. Forms an RuvA(8)-RuvB(12)-Holliday junction (HJ) complex. HJ DNA is sandwiched between 2 RuvA tetramers; dsDNA enters through RuvA and exits via RuvB. An RuvB hexamer assembles on each DNA strand where it exits the tetramer. Each RuvB hexamer is contacted by two RuvA subunits (via domain III) on 2 adjacent RuvB subunits; this complex drives branch migration. In the full resolvosome a probable DNA-RuvA(4)-RuvB(12)-RuvC(2) complex forms which resolves the HJ.

The protein localises to the cytoplasm. It catalyses the reaction ATP + H2O = ADP + phosphate + H(+). Functionally, the RuvA-RuvB-RuvC complex processes Holliday junction (HJ) DNA during genetic recombination and DNA repair, while the RuvA-RuvB complex plays an important role in the rescue of blocked DNA replication forks via replication fork reversal (RFR). RuvA specifically binds to HJ cruciform DNA, conferring on it an open structure. The RuvB hexamer acts as an ATP-dependent pump, pulling dsDNA into and through the RuvAB complex. RuvB forms 2 homohexamers on either side of HJ DNA bound by 1 or 2 RuvA tetramers; 4 subunits per hexamer contact DNA at a time. Coordinated motions by a converter formed by DNA-disengaged RuvB subunits stimulates ATP hydrolysis and nucleotide exchange. Immobilization of the converter enables RuvB to convert the ATP-contained energy into a lever motion, pulling 2 nucleotides of DNA out of the RuvA tetramer per ATP hydrolyzed, thus driving DNA branch migration. The RuvB motors rotate together with the DNA substrate, which together with the progressing nucleotide cycle form the mechanistic basis for DNA recombination by continuous HJ branch migration. Branch migration allows RuvC to scan DNA until it finds its consensus sequence, where it cleaves and resolves cruciform DNA. This is Holliday junction branch migration complex subunit RuvB from Bartonella henselae (strain ATCC 49882 / DSM 28221 / CCUG 30454 / Houston 1) (Rochalimaea henselae).